The chain runs to 278 residues: S-formylglutathione hydrolase YeiG (278 aa).

Residues Ser145, Asp223, and His256 each act as charge relay system in the active site.

This sequence belongs to the esterase D family.

It catalyses the reaction S-formylglutathione + H2O = formate + glutathione + H(+). Serine hydrolase involved in the detoxification of formaldehyde. Hydrolyzes S-formylglutathione to glutathione and formate. The chain is S-formylglutathione hydrolase YeiG (yeiG) from Escherichia coli O139:H28 (strain E24377A / ETEC).